The sequence spans 624 residues: Polycystin-2-like protein 2 (624 aa).

Residues methionine 1 to glutamate 31 lie on the Cytoplasmic side of the membrane. Residues leucine 32–proline 52 traverse the membrane as a helical segment. Residues histidine 53–serine 276 lie on the Extracellular side of the membrane. N-linked (GlcNAc...) asparagine glycans are attached at residues asparagine 115 and asparagine 138. Residues tyrosine 277–threonine 297 traverse the membrane as a helical segment. At threonine 298–serine 314 the chain is on the cytoplasmic side. Residues isoleucine 315–threonine 335 traverse the membrane as a helical segment. The Extracellular portion of the chain corresponds to tyrosine 336–phenylalanine 360. The chain crosses the membrane as a helical span at residues leucine 361–isoleucine 381. The Cytoplasmic portion of the chain corresponds to lysine 382–aspartate 406. Residues isoleucine 407–leucine 427 traverse the membrane as a helical segment. Over valine 428 to isoleucine 469 the chain is Extracellular. A helical transmembrane segment spans residues tyrosine 470–isoleucine 490. The Cytoplasmic portion of the chain corresponds to asparagine 491 to leucine 624. The stretch at glutamate 556 to tyrosine 576 forms a coiled coil.

Belongs to the polycystin family. As to quaternary structure, interacts with TRPC1 and TRPC5. As to expression, expressed only in testis. Expressed also in brain and kidney. Expressed only in transformed lymphoblasts.

The protein resides in the membrane. Its function is as follows. Exhibits a lower single conductance but no spontaneous channel activity. May function as a regulator of calcium channels or a channel component involving Ca2(+) homeostasis. In Homo sapiens (Human), this protein is Polycystin-2-like protein 2.